The chain runs to 480 residues: ATP synthase subunit beta (480 aa).

154 to 161 (GGAGVGKT) lines the ATP pocket.

It belongs to the ATPase alpha/beta chains family. As to quaternary structure, F-type ATPases have 2 components, CF(1) - the catalytic core - and CF(0) - the membrane proton channel. CF(1) has five subunits: alpha(3), beta(3), gamma(1), delta(1), epsilon(1). CF(0) has four main subunits: a(1), b(1), b'(1) and c(9-12).

Its subcellular location is the cell inner membrane. The enzyme catalyses ATP + H2O + 4 H(+)(in) = ADP + phosphate + 5 H(+)(out). Produces ATP from ADP in the presence of a proton gradient across the membrane. The catalytic sites are hosted primarily by the beta subunits. This chain is ATP synthase subunit beta, found in Bradyrhizobium sp. (strain ORS 278).